The primary structure comprises 474 residues: tRNA-2-methylthio-N(6)-dimethylallyladenosine synthase (474 aa).

The MTTase N-terminal domain occupies 3–120; sequence KKLHIKTWGC…LPEMINAVRG (118 aa). [4Fe-4S] cluster-binding residues include Cys12, Cys49, Cys83, Cys157, Cys161, and Cys164. The 233-residue stretch at 143-375 folds into the Radical SAM core domain; the sequence is RADGPTAFVS…QERINQQAMA (233 aa). The TRAM domain occupies 378–441; that stretch reads RRMLGTVQRI…TNSLRGKIVR (64 aa).

The protein belongs to the methylthiotransferase family. MiaB subfamily. Monomer. [4Fe-4S] cluster is required as a cofactor.

The protein localises to the cytoplasm. It carries out the reaction N(6)-dimethylallyladenosine(37) in tRNA + (sulfur carrier)-SH + AH2 + 2 S-adenosyl-L-methionine = 2-methylsulfanyl-N(6)-dimethylallyladenosine(37) in tRNA + (sulfur carrier)-H + 5'-deoxyadenosine + L-methionine + A + S-adenosyl-L-homocysteine + 2 H(+). Its function is as follows. Catalyzes the methylthiolation of N6-(dimethylallyl)adenosine (i(6)A), leading to the formation of 2-methylthio-N6-(dimethylallyl)adenosine (ms(2)i(6)A) at position 37 in tRNAs that read codons beginning with uridine. The polypeptide is tRNA-2-methylthio-N(6)-dimethylallyladenosine synthase (Klebsiella pneumoniae (strain 342)).